Here is a 451-residue protein sequence, read N- to C-terminus: Glucose-6-phosphate isomerase (451 aa).

The active-site Proton donor is the Glu-291. Catalysis depends on residues His-312 and Lys-426.

It belongs to the GPI family.

It is found in the cytoplasm. The enzyme catalyses alpha-D-glucose 6-phosphate = beta-D-fructose 6-phosphate. Its pathway is carbohydrate biosynthesis; gluconeogenesis. It functions in the pathway carbohydrate degradation; glycolysis; D-glyceraldehyde 3-phosphate and glycerone phosphate from D-glucose: step 2/4. In terms of biological role, catalyzes the reversible isomerization of glucose-6-phosphate to fructose-6-phosphate. This chain is Glucose-6-phosphate isomerase, found in Caldanaerobacter subterraneus subsp. tengcongensis (strain DSM 15242 / JCM 11007 / NBRC 100824 / MB4) (Thermoanaerobacter tengcongensis).